The following is a 561-amino-acid chain: Arginine--tRNA ligase (561 aa).

The short motif at 119 to 129 (PNIAKPMSMGH) is the 'HIGH' region element.

Belongs to the class-I aminoacyl-tRNA synthetase family. In terms of assembly, monomer.

Its subcellular location is the cytoplasm. It catalyses the reaction tRNA(Arg) + L-arginine + ATP = L-arginyl-tRNA(Arg) + AMP + diphosphate. In Lactobacillus acidophilus (strain ATCC 700396 / NCK56 / N2 / NCFM), this protein is Arginine--tRNA ligase.